Consider the following 217-residue polypeptide: Ribosomal RNA small subunit methyltransferase G (217 aa).

S-adenosyl-L-methionine is bound by residues G74, L79, 125-126 (IQ), and R143.

Belongs to the methyltransferase superfamily. RNA methyltransferase RsmG family.

It is found in the cytoplasm. The enzyme catalyses guanosine(527) in 16S rRNA + S-adenosyl-L-methionine = N(7)-methylguanosine(527) in 16S rRNA + S-adenosyl-L-homocysteine. Its function is as follows. Specifically methylates the N7 position of guanine in position 527 of 16S rRNA. This is Ribosomal RNA small subunit methyltransferase G from Syntrophotalea carbinolica (strain DSM 2380 / NBRC 103641 / GraBd1) (Pelobacter carbinolicus).